The following is a 129-amino-acid chain: Procyclic form-specific polypeptide A-beta (129 aa).

Residues 1-27 (MAPRSLYLLAVLLFSANLFAGVGFAAA) form the signal peptide. Positions 27-111 (AAEGPEDKGL…PEPEPGAATL (85 aa)) are disordered. A compositionally biased stretch (acidic residues) spans 53-104 (DDTNGTDPDPEPEPEPEPEPEPEPEPEPEPEPEPEPEPEPEPEPEPEPEPEP). The N-linked (GlcNAc...) asparagine glycan is linked to asparagine 56. 24 consecutive repeat copies span residues 59–60 (DP), 61–62 (DP), 63–64 (EP), 65–66 (EP), 67–68 (EP), 69–70 (EP), 71–72 (EP), 73–74 (EP), 75–76 (EP), 77–78 (EP), 79–80 (EP), 81–82 (EP), 83–84 (EP), 85–86 (EP), 87–88 (EP), 89–90 (EP), 91–92 (EP), 93–94 (EP), 95–96 (EP), 97–98 (EP), 99–100 (EP), 101–102 (EP), 103–104 (EP), and 105–106 (EP). The interval 59–106 (DPDPEPEPEPEPEPEPEPEPEPEPEPEPEPEPEPEPEPEPEPEPEPEP) is 24 X 2 AA tandem repeats of [DE]-P. Glycine 107 carries GPI-anchor amidated glycine lipidation. A propeptide spanning residues 108–129 (AATLKSVALPFAIAAVGLVAAF) is cleaved from the precursor.

The protein localises to the cell membrane. In terms of biological role, major surface antigen of procyclic forms. This Trypanosoma brucei brucei protein is Procyclic form-specific polypeptide A-beta (PARPA-BETA).